The chain runs to 49 residues: Small, acid-soluble spore protein O (49 aa).

The disordered stretch occupies residues 1–49; that stretch reads MGKRKANHIVPGMNAASAQGQGTGYNEEFANEPLTAAQRQNNKKRKKNQ.

This sequence belongs to the SspO family.

The protein localises to the spore core. The sequence is that of Small, acid-soluble spore protein O from Bacillus cytotoxicus (strain DSM 22905 / CIP 110041 / 391-98 / NVH 391-98).